The sequence spans 589 residues: V-type ATP synthase alpha chain (589 aa).

232 to 239 (GPFGSGKT) contacts ATP.

This sequence belongs to the ATPase alpha/beta chains family.

It catalyses the reaction ATP + H2O + 4 H(+)(in) = ADP + phosphate + 5 H(+)(out). Produces ATP from ADP in the presence of a proton gradient across the membrane. The V-type alpha chain is a catalytic subunit. This Acetivibrio thermocellus (strain ATCC 27405 / DSM 1237 / JCM 9322 / NBRC 103400 / NCIMB 10682 / NRRL B-4536 / VPI 7372) (Clostridium thermocellum) protein is V-type ATP synthase alpha chain.